The following is a 63-amino-acid chain: Large ribosomal subunit protein uL29 (63 aa).

The protein belongs to the universal ribosomal protein uL29 family.

In Klebsiella pneumoniae (strain 342), this protein is Large ribosomal subunit protein uL29.